The sequence spans 274 residues: ATP synthase subunit a (274 aa).

A run of 5 helical transmembrane segments spans residues 44–64 (VDSM…FYMV), 110–130 (FIWV…FPFI), 142–164 (IVPS…LILF), 212–232 (LFGN…LLPW), and 243–263 (AIFH…LTIV).

It belongs to the ATPase A chain family. F-type ATPases have 2 components, CF(1) - the catalytic core - and CF(0) - the membrane proton channel. CF(1) has five subunits: alpha(3), beta(3), gamma(1), delta(1), epsilon(1). CF(0) has three main subunits: a(1), b(2) and c(9-12). The alpha and beta chains form an alternating ring which encloses part of the gamma chain. CF(1) is attached to CF(0) by a central stalk formed by the gamma and epsilon chains, while a peripheral stalk is formed by the delta and b chains.

It is found in the cell membrane. In terms of biological role, key component of the proton channel; it plays a direct role in the translocation of protons across the membrane. This is ATP synthase subunit a from Buchnera aphidicola subsp. Acyrthosiphon pisum (strain APS) (Acyrthosiphon pisum symbiotic bacterium).